Consider the following 388-residue polypeptide: MAPISHYIGKTSLTTLAIGIAIGITVSNIVKFSSTQRRHFSSSGYIPDSPHSHGENDFVEGPDDSLSWHDEHSHSHKFENDSVARQLFKKVRVLCWVMTNPNNIHTKARHVKATWGKRCNVLLFMSSRADRDLPALALNVQEGRDNLWAKTKEAFKLIHSKYLETADWFIKCDDDTFLVLENLRYFLQDKSPSEPVYYGRKFKPIVQQGYMSGGAGYVLSKESLVRLVTQGIGHKEDCRADSGGAEDVEMGRCLQSVNVQAGDSRDELGRERFHPFVPEHHLIPDILPPDMWYWSYNFYPAKQGQECCSDYAISFHYVPPNMMYVLEYLVYHLKPYGITSAYESTEEQDHGSSHKDTDAMKPEGKGMEDKEDEETNISLAQTDSKHIS.

The Cytoplasmic segment spans residues 1–12 (MAPISHYIGKTS). Residues 13–30 (LTTLAIGIAIGITVSNIV) traverse the membrane as a helical; Signal-anchor for type II membrane protein segment. Over 31–388 (KFSSTQRRHF…LAQTDSKHIS (358 aa)) the chain is Lumenal. The disordered stretch occupies residues 43–65 (SGYIPDSPHSHGENDFVEGPDDS). N-linked (GlcNAc...) asparagine glycosylation occurs at N80. Residues C95 and C119 are joined by a disulfide bond. M98, N100, E142, G143, R144, K150, and D173 together coordinate UDP. Mn(2+)-binding residues include D173 and D175. A disulfide bridge connects residues C238 and C253. Position 292 (W292) interacts with a glycoprotein. An intrachain disulfide couples C307 to C308. Residues H316 and Y317 each contribute to the UDP site. H316 contributes to the Mn(2+) binding site. Residues 344 to 388 (STEEQDHGSSHKDTDAMKPEGKGMEDKEDEETNISLAQTDSKHIS) are disordered. Positions 347-368 (EQDHGSSHKDTDAMKPEGKGME) are enriched in basic and acidic residues. N-linked (GlcNAc...) asparagine glycosylation occurs at N376.

Belongs to the glycosyltransferase 31 family. Beta3-Gal-T subfamily. As to quaternary structure, homodimer; disulfide-linked. Requires Mn(2+) as cofactor.

The protein resides in the membrane. The enzyme catalyses an N-acetyl-alpha-D-galactosaminyl derivative + UDP-alpha-D-galactose = a beta-D-galactosyl-(1-&gt;3)-N-acetyl-alpha-D-galactosaminyl derivative + UDP + H(+). It functions in the pathway protein modification; protein glycosylation. Its function is as follows. Glycosyltransferase that generates the core 1 O-glycan Gal-beta1-3GalNAc-alpha1-Ser/Thr (T antigen), which is a precursor for many extended O-glycans in glycoproteins. The chain is Glycoprotein-N-acetylgalactosamine 3-beta-galactosyltransferase 1 from Biomphalaria glabrata (Bloodfluke planorb).